A 243-amino-acid chain; its full sequence is Carboxy-S-adenosyl-L-methionine synthase (243 aa).

Residues Tyr-40, 65–67, 90–91, 118–119, Asn-133, and Arg-200 each bind S-adenosyl-L-methionine; these read GCS, DN, and DI.

Belongs to the class I-like SAM-binding methyltransferase superfamily. Cx-SAM synthase family. As to quaternary structure, homodimer.

It carries out the reaction prephenate + S-adenosyl-L-methionine = carboxy-S-adenosyl-L-methionine + 3-phenylpyruvate + H2O. Functionally, catalyzes the conversion of S-adenosyl-L-methionine (SAM) to carboxy-S-adenosyl-L-methionine (Cx-SAM). This Shewanella amazonensis (strain ATCC BAA-1098 / SB2B) protein is Carboxy-S-adenosyl-L-methionine synthase.